A 437-amino-acid polypeptide reads, in one-letter code: Carbonic anhydrase 9 (437 aa).

The signal sequence occupies residues 1-31 (MASLGPSPWAPLSTPAPTAQLLLFLLLQVSA). The proteoglycan-like (PG) stretch occupies residues 32-95 (QPQGLSGMQG…RMEESLGLED (64 aa)). Over 32–390 (QPQGLSGMQG…HVNSCFTAGD (359 aa)) the chain is Extracellular. The interval 34–118 (QGLSGMQGEP…HGDEKGGGHS (85 aa)) is disordered. The segment covering 50–79 (SGEDELGVDVLPSEEDAPEEADPPDGEDPP) has biased composition (acidic residues). The interval 96–390 (LSTPEAPEHS…HVNSCFTAGD (295 aa)) is catalytic. A glycan (O-linked (GlcNAc...) threonine) is linked at T98. In terms of domain architecture, Alpha-carbonic anhydrase spans 118–369 (SHWSYGGTLL…LNGRTIEASF (252 aa)). C135 and C315 are joined by a disulfide. H179 serves as the catalytic Proton donor/acceptor. The Zn(2+) site is built by H205, H207, and H230. 311-312 (TT) is a substrate binding site. N325 is a glycosylation site (N-linked (GlcNAc...) asparagine). A helical membrane pass occupies residues 391–411 (ILALVFGLLFAVTSIAFLLQL). At 412–437 (RRQHRHRSGTKDRVSYSPAEMTETGA) the chain is on the cytoplasmic side. A Phosphotyrosine modification is found at Y427.

The protein belongs to the alpha-carbonic anhydrase family. As to quaternary structure, forms oligomers linked by disulfide bonds. It depends on Zn(2+) as a cofactor. In terms of processing, asn-325 bears high-mannose type glycan structures.

The protein resides in the nucleus. Its subcellular location is the nucleolus. The protein localises to the cell membrane. It localises to the cell projection. It is found in the microvillus membrane. The enzyme catalyses hydrogencarbonate + H(+) = CO2 + H2O. Inhibited by acetazolamide. Catalyzes the interconversion between carbon dioxide and water and the dissociated ions of carbonic acid (i.e. bicarbonate and hydrogen ions). This chain is Carbonic anhydrase 9 (Ca9), found in Mus musculus (Mouse).